Reading from the N-terminus, the 576-residue chain is Arginine--tRNA ligase (576 aa).

Positions 126-136 (ANPTGPMHIGH) match the 'HIGH' region motif.

This sequence belongs to the class-I aminoacyl-tRNA synthetase family. Monomer.

The protein resides in the cytoplasm. It catalyses the reaction tRNA(Arg) + L-arginine + ATP = L-arginyl-tRNA(Arg) + AMP + diphosphate. This chain is Arginine--tRNA ligase, found in Rickettsia typhi (strain ATCC VR-144 / Wilmington).